A 172-amino-acid chain; its full sequence is Bacilliredoxin SRU_0242 (172 aa).

Residues 141-172 are disordered; that stretch reads TDEAPPSDAPSRPDLSSSPNAGGLPSTFQSIS. Polar residues predominate over residues 154–172; the sequence is DLSSSPNAGGLPSTFQSIS.

The protein belongs to the bacilliredoxin family.

This chain is Bacilliredoxin SRU_0242, found in Salinibacter ruber (strain DSM 13855 / M31).